The sequence spans 324 residues: Adenine deaminase (324 aa).

The Zn(2+) site is built by H11, H13, and H189. E192 acts as the Proton donor in catalysis. D270 provides a ligand contact to Zn(2+). Residue D271 coordinates substrate.

It belongs to the metallo-dependent hydrolases superfamily. Adenosine and AMP deaminases family. Adenine deaminase type 2 subfamily. Zn(2+) serves as cofactor.

The enzyme catalyses adenine + H2O + H(+) = hypoxanthine + NH4(+). Its function is as follows. Catalyzes the hydrolytic deamination of adenine to hypoxanthine. Plays an important role in the purine salvage pathway and in nitrogen catabolism. The sequence is that of Adenine deaminase from Sinorhizobium medicae (strain WSM419) (Ensifer medicae).